The primary structure comprises 172 residues: Translationally-controlled tumor protein homolog (172 aa).

The region spanning 1 to 172 is the TCTP domain; it reads MKIYKDIITG…FKHGLDEEKC (172 aa).

The protein belongs to the TCTP family.

Its subcellular location is the cytoplasm. Involved in calcium binding and microtubule stabilization. This chain is Translationally-controlled tumor protein homolog, found in Drosophila yakuba (Fruit fly).